The primary structure comprises 282 residues: MSDTPLRIAVTGVTGRMGKEIVTCIVKEEKQFSQEIVLGAAITRLNTNICGMDAGILINTDALGIEITDNLESIKDNFDVLVDFTAPDISIEYLKFCVNNNKNIVIGTTGFNQIHKNIILNASHKIGIVFSSNFSIGVALISKLLHKITQVIGNTSDISIIETHHNRKRDIPSGTSLTMQNIIVNALRSIHSNRIIDSNLDSTTYSPASSYKDILIHSIRAGDVVGEHTVLFAGPGERLEITHKASDRLIFAHGALRAAFWVGRDKIGLFDISDILEMDTLL.

Residue 12 to 17 participates in NAD(+) binding; the sequence is GVTGRM. An NADP(+)-binding site is contributed by arginine 44. NAD(+)-binding positions include 107–109 and 131–134; these read GTT and SSNF. Histidine 164 acts as the Proton donor/acceptor in catalysis. Histidine 165 lines the (S)-2,3,4,5-tetrahydrodipicolinate pocket. The active-site Proton donor is the lysine 168. 174–175 is a binding site for (S)-2,3,4,5-tetrahydrodipicolinate; sequence GT.

Belongs to the DapB family. In terms of assembly, homotetramer.

The protein resides in the cytoplasm. It catalyses the reaction (S)-2,3,4,5-tetrahydrodipicolinate + NAD(+) + H2O = (2S,4S)-4-hydroxy-2,3,4,5-tetrahydrodipicolinate + NADH + H(+). The catalysed reaction is (S)-2,3,4,5-tetrahydrodipicolinate + NADP(+) + H2O = (2S,4S)-4-hydroxy-2,3,4,5-tetrahydrodipicolinate + NADPH + H(+). The protein operates within amino-acid biosynthesis; L-lysine biosynthesis via DAP pathway; (S)-tetrahydrodipicolinate from L-aspartate: step 4/4. Functionally, catalyzes the conversion of 4-hydroxy-tetrahydrodipicolinate (HTPA) to tetrahydrodipicolinate. This Blochmanniella pennsylvanica (strain BPEN) protein is 4-hydroxy-tetrahydrodipicolinate reductase.